The chain runs to 351 residues: UDP-N-acetylglucosamine--N-acetylmuramyl-(pentapeptide) pyrophosphoryl-undecaprenol N-acetylglucosamine transferase (351 aa).

UDP-N-acetyl-alpha-D-glucosamine-binding positions include 13–15, Asn125, Arg161, Ser189, Ile241, 260–265, and Gln285; these read TGG and ALTVCE.

It belongs to the glycosyltransferase 28 family. MurG subfamily.

The protein resides in the cell inner membrane. It carries out the reaction di-trans,octa-cis-undecaprenyl diphospho-N-acetyl-alpha-D-muramoyl-L-alanyl-D-glutamyl-meso-2,6-diaminopimeloyl-D-alanyl-D-alanine + UDP-N-acetyl-alpha-D-glucosamine = di-trans,octa-cis-undecaprenyl diphospho-[N-acetyl-alpha-D-glucosaminyl-(1-&gt;4)]-N-acetyl-alpha-D-muramoyl-L-alanyl-D-glutamyl-meso-2,6-diaminopimeloyl-D-alanyl-D-alanine + UDP + H(+). Its pathway is cell wall biogenesis; peptidoglycan biosynthesis. Its function is as follows. Cell wall formation. Catalyzes the transfer of a GlcNAc subunit on undecaprenyl-pyrophosphoryl-MurNAc-pentapeptide (lipid intermediate I) to form undecaprenyl-pyrophosphoryl-MurNAc-(pentapeptide)GlcNAc (lipid intermediate II). This Haemophilus influenzae (strain ATCC 51907 / DSM 11121 / KW20 / Rd) protein is UDP-N-acetylglucosamine--N-acetylmuramyl-(pentapeptide) pyrophosphoryl-undecaprenol N-acetylglucosamine transferase.